A 180-amino-acid chain; its full sequence is GTP cyclohydrolase 1 (180 aa).

Residues cysteine 71, histidine 74, and cysteine 142 each coordinate Zn(2+).

Belongs to the GTP cyclohydrolase I family. As to quaternary structure, homomer.

The enzyme catalyses GTP + H2O = 7,8-dihydroneopterin 3'-triphosphate + formate + H(+). It participates in cofactor biosynthesis; 7,8-dihydroneopterin triphosphate biosynthesis; 7,8-dihydroneopterin triphosphate from GTP: step 1/1. The chain is GTP cyclohydrolase 1 from Helicobacter pylori (strain G27).